Reading from the N-terminus, the 636-residue chain is Polyadenylate-binding protein 1 (636 aa).

Met-1 is subject to N-acetylmethionine. 4 RRM domains span residues 11-89 (ASLY…WSQR), 99-175 (GNIF…RFKS), 191-268 (TNVY…RAQK), and 294-370 (VNLY…LAQR). The interval 166-289 (RKVFVGRFKS…FEQMKQDRIT (124 aa)) is CSDE1-binding. At Lys-299 the chain carries N6-methyllysine. Ser-315 bears the Phosphoserine mark. Thr-319 bears the Phosphothreonine mark. Omega-N-methylarginine occurs at positions 385, 419, 432, and 436. Arg-455 and Arg-460 each carry omega-N-methylated arginine; by CARM1. An omega-N-methylarginine mark is found at Arg-475 and Arg-481. At Arg-493 the chain carries Asymmetric dimethylarginine; alternate. The residue at position 493 (Arg-493) is a Dimethylated arginine; alternate. Arg-493 bears the Omega-N-methylarginine; alternate mark. The residue at position 506 (Arg-506) is an Omega-N-methylarginine. The residue at position 512 (Lys-512) is an N6-acetyllysine. The residue at position 518 (Arg-518) is an Omega-N-methylarginine. The PABC domain occupies 542-619 (QEPLTASMLA…AVAVLQAHQA (78 aa)).

It belongs to the polyadenylate-binding protein type-1 family. May form homodimers. Component of a multisubunit autoregulatory ribonucleoprotein complex (ARC), at least composed of IGF2BP1, PABPC1 and CSDE1. Directly interacts with IGF2BP1. Part of a complex associated with the FOS mCRD domain and consisting of HNRPD, SYNCRIP, PAIP1 and CSDE1/UNR. Interacts with PAIP1 and PAIP2 (via the PABPC1-interacting motifs PAM1 and PAM2). Interacts with PAIP1 with a 1:1 stoichiometry and with PAIP2 with a 1:2 stoichiometry. The interaction with CSDE1 is direct and RNA-independent. Found in a mRNP complex with YBX2. Interacts with TENT2/GLD2. Identified in the spliceosome C complex. Identified in a mRNP complex, at least composed of DHX9, DDX3X, ELAVL1, HNRNPU, IGF2BP1, ILF3, PABPC1, PCBP2, PTBP2, STAU1, STAU2, SYNCRIP and YBX1. The interaction with DDX3X is direct and RNA-independent. This interaction increases in stressed cells and decreases during cell recovery. Identified in a IGF2BP1-dependent mRNP granule complex containing untranslated mRNAs. Interacts with NXF1/TAP. Interacts with PIWIL1. Interacts with AGO1, AGO2, GSPT1 and GSPT2. Interacts with LARP4B. Interacts (via the second and third RRM domains and the C-terminus) with PAIP2B (via central acidic portion and C-terminus). Forms a complex with LARP1 and SHFL. Interacts with LARP4. Interacts with ZFC3H1 in a RNase-sensitive manner. Interacts with TRIM71 (via NHL repeats) in an RNA-dependent manner. Interacts with TENT5C; the interaction has no effect on TENT5C poly(A) polymerase function. Interacts with G3BP1 and G3BP2. Interacts with ENDOV; the interaction is RNA-dependent and stimulates ENDOV activity. Interacts with UPF1; the interaction is RNA-dependent. Interacts with IGF2BP2 and IGF2BP3. May interact with SETX. Interacts with RBM46. Interacts with PAN3. Phosphorylated by MAPKAPK2. Post-translationally, methylated by CARM1. Arg-493 is dimethylated, probably to asymmetric dimethylarginine.

It localises to the cytoplasm. The protein localises to the stress granule. It is found in the nucleus. The protein resides in the cell projection. Its subcellular location is the lamellipodium. In terms of biological role, binds the poly(A) tail of mRNA, including that of its own transcript, and regulates processes of mRNA metabolism such as pre-mRNA splicing and mRNA stability. Its function in translational initiation regulation can either be enhanced by PAIP1 or repressed by PAIP2. Can probably bind to cytoplasmic RNA sequences other than poly(A) in vivo. Binds to N6-methyladenosine (m6A)-containing mRNAs and contributes to MYC stability by binding to m6A-containing MYC mRNAs. Involved in translationally coupled mRNA turnover. Implicated with other RNA-binding proteins in the cytoplasmic deadenylation/translational and decay interplay of the FOS mRNA mediated by the major coding-region determinant of instability (mCRD) domain. Involved in regulation of nonsense-mediated decay (NMD) of mRNAs containing premature stop codons; for the recognition of premature termination codons (PTC) and initiation of NMD a competitive interaction between UPF1 and PABPC1 with the ribosome-bound release factors is proposed. By binding to long poly(A) tails, may protect them from uridylation by ZCCHC6/ZCCHC11 and hence contribute to mRNA stability. This is Polyadenylate-binding protein 1 (PABPC1) from Bos taurus (Bovine).